Here is a 774-residue protein sequence, read N- to C-terminus: C6 finger domain transcription factor nscR (774 aa).

A DNA-binding region (zn(2)-C6 fungal-type) is located at residues 17–43; the sequence is CELCRERKIKCDKVDPCNNCVSAGVVC. Disordered stretches follow at residues 61–94, 536–559, and 665–697; these read RPMS…SGAV, LQLP…PQEH, and PTFS…SDLS. Residues 67 to 78 show a composition bias toward pro residues; the sequence is FVPPRAPTPVAG. Positions 536–548 are enriched in low complexity; the sequence is LQLPQPSNGSSQP. Over residues 665 to 674 the composition is skewed to polar residues; the sequence is PTFSLGSSTG. The segment covering 675–697 has biased composition (low complexity); it reads TSAAPTPRSRASSTPSDTLSDLS.

It is found in the nucleus. In terms of biological role, transcription factor that specifically regulates the neosartoricin biosynthesis gene cluster. This is C6 finger domain transcription factor nscR from Aspergillus fumigatus (strain ATCC MYA-4609 / CBS 101355 / FGSC A1100 / Af293) (Neosartorya fumigata).